The primary structure comprises 61 residues: Large ribosomal subunit protein bL28 (61 aa).

Belongs to the bacterial ribosomal protein bL28 family.

This Lactobacillus gasseri (strain ATCC 33323 / DSM 20243 / BCRC 14619 / CIP 102991 / JCM 1131 / KCTC 3163 / NCIMB 11718 / NCTC 13722 / AM63) protein is Large ribosomal subunit protein bL28.